Consider the following 412-residue polypeptide: Alanyl-tRNA editing protein Aarsd1 (412 aa).

2 residues coordinate Zn(2+): H109 and H113. S174 is modified (phosphoserine). Zn(2+) contacts are provided by C209 and H213.

This sequence belongs to the class-II aminoacyl-tRNA synthetase family. Alax-L subfamily. Zn(2+) serves as cofactor.

The protein localises to the cytoplasm. Functions in trans to edit the amino acid moiety from incorrectly charged tRNA(Ala). In Rattus norvegicus (Rat), this protein is Alanyl-tRNA editing protein Aarsd1 (Aarsd1).